Here is a 112-residue protein sequence, read N- to C-terminus: Macrodomain Ori protein (112 aa).

The tract at residues 91–112 (FHTLSGGKPQVEGAEDYTEADD) is disordered. A compositionally biased stretch (acidic residues) spans 103–112 (GAEDYTEADD).

The protein belongs to the MaoP family.

Involved in the organization of the Ori region of the chromosome into a macrodomain (MD). It constrains DNA mobility in the Ori macrodomain and limits long-distance DNA interactions with other chromosomal regions. This chain is Macrodomain Ori protein, found in Salmonella choleraesuis (strain SC-B67).